Here is a 200-residue protein sequence, read N- to C-terminus: Glycerol-3-phosphate acyltransferase (200 aa).

6 helical membrane passes run 9 to 29, 54 to 74, 81 to 101, 112 to 132, 140 to 160, and 165 to 185; these read IIIG…AYFW, VPGM…VLLA, DIAV…PLWL, GAGA…LVWL, YVSL…ALLN, and YLIF…SNIG.

Belongs to the PlsY family. Probably interacts with PlsX.

The protein resides in the cell membrane. It carries out the reaction an acyl phosphate + sn-glycerol 3-phosphate = a 1-acyl-sn-glycero-3-phosphate + phosphate. It functions in the pathway lipid metabolism; phospholipid metabolism. In terms of biological role, catalyzes the transfer of an acyl group from acyl-phosphate (acyl-PO(4)) to glycerol-3-phosphate (G3P) to form lysophosphatidic acid (LPA). This enzyme utilizes acyl-phosphate as fatty acyl donor, but not acyl-CoA or acyl-ACP. In Desulforamulus reducens (strain ATCC BAA-1160 / DSM 100696 / MI-1) (Desulfotomaculum reducens), this protein is Glycerol-3-phosphate acyltransferase.